A 144-amino-acid chain; its full sequence is Large ribosomal subunit protein uL16 (144 aa).

Belongs to the universal ribosomal protein uL16 family. Part of the 50S ribosomal subunit.

Functionally, binds 23S rRNA and is also seen to make contacts with the A and possibly P site tRNAs. In Ligilactobacillus salivarius (strain UCC118) (Lactobacillus salivarius), this protein is Large ribosomal subunit protein uL16.